Consider the following 76-residue polypeptide: ATP synthase subunit 9, mitochondrial (76 aa).

Residue Met-1 is modified to N-formylmethionine. Transmembrane regions (helical) follow at residues Ile-14–Ile-34 and Ile-52–Leu-72.

In terms of assembly, F-type ATP synthases have 2 components, the catalytic core F(1) and the membrane-embedded component F(0), linked together by a central stalk and a peripheral stalk. The central stalk, also called rotor shaft, is often seen as part of F(1). The peripheral stalk is seen as part of F(0). F(0) contains the membrane channel next to the rotor. F-type ATP synthases form dimers but each monomer functions independently in ATP generation. The dimer consists of 18 different polypeptides: ATP1 (subunit alpha, part of F(1), 3 molecules per monomer), ATP2 (subunit beta, part of F(1), 3 molecules per monomer), ATP3 (subunit gamma, part of the central stalk), ATP4 (subunit b, part of the peripheral stalk), ATP5/OSCP (subunit 5/OSCP, part of the peripheral stalk), ATP6 (subunit a, part of the peripheral stalk), ATP7 (subunit d, part of the peripheral stalk), ATP8 (subunit 8, part of the peripheral stalk), OLI1 (subunit c, part of the rotor, 10 molecules per monomer), ATP14 (subunit h, part of the peripheral stalk), ATP15 (subunit epsilon, part of the central stalk), ATP16 (subunit delta, part of the central stalk), ATP17 (subunit f, part of the peripheral stalk), ATP18 (subunit i/j, part of the peripheral stalk). Dimer-specific subunits are ATP19 (subunit k, at interface between monomers), ATP20 (subunit g, at interface between monomers), TIM11 (subunit e, at interface between monomers). Also contains subunit L.

The protein localises to the mitochondrion inner membrane. In terms of biological role, mitochondrial membrane ATP synthase (F(1)F(0) ATP synthase or Complex V) produces ATP from ADP in the presence of a proton gradient across the membrane which is generated by electron transport complexes of the respiratory chain. F-type ATP synthases consist of two structural domains, F(1) - containing the extramembraneous catalytic core, and F(0) - containing the membrane proton channel, linked together by a central stalk and a peripheral stalk. During catalysis, ATP synthesis in the catalytic domain of F(1) is coupled via a rotary mechanism of the central stalk subunits to proton translocation. Part of the complex F(0) domain. A homomeric c-ring of 10 OLI1/ATP9 subunits is part of the complex rotary element. The protein is ATP synthase subunit 9, mitochondrial of Pichia angusta (Yeast).